The chain runs to 1000 residues: DENN domain-containing protein 2A (1000 aa).

Disordered stretches follow at residues 1–155 (MLEA…LRFQ), 174–328 (DGSA…RKSY), 427–464 (KLLDTRKLSRDGAGSPLRTSPPSTPSSPDDTFFNLGDL), and 491–525 (KRVKRLSQSTESNSGKVTDENSESDSDTEEKLKAH). The segment covering 34–43 (QLNSVPNSGP) has biased composition (polar residues). Basic and acidic residues-rich tracts occupy residues 56–70 (IKDKISKWEGKKEPP), 79–117 (DGQEDHLPSCKVERRGSELTRTKNGMRLETERLQNDSRA), 140–155 (SQHRGRELKPSDLRFQ), and 221–237 (HLEVREPGPEISEDWKG). Composition is skewed to pro residues over residues 249-258 (PPKPFINPVP) and 288-307 (PPLPSLPPPPPPLPSSPPPT). The segment covering 427-436 (KLLDTRKLSR) has biased composition (basic and acidic residues). Positions 496–506 (LSQSTESNSGK) are enriched in polar residues. At S544 the chain carries Phosphoserine. One can recognise a uDENN domain in the interval 559 to 708 (EYFVVVSLHK…PFPALGKTII (150 aa)). Positions 730–863 (RLEHVDFESL…LQVALEHILE (134 aa)) constitute a cDENN domain. The dDENN domain occupies 865 to 960 (RNDLACDQDG…QERELRRQDA (96 aa)).

The protein resides in the cytoplasm. Its subcellular location is the cytoskeleton. In terms of biological role, guanine nucleotide exchange factor (GEF) which may activate RAB9A and RAB9B. Promotes the exchange of GDP to GTP, converting inactive GDP-bound Rab proteins into their active GTP-bound form. May play a role in late endosomes back to trans-Golgi network/TGN transport. In Mus musculus (Mouse), this protein is DENN domain-containing protein 2A (Dennd2a).